The sequence spans 150 residues: Transcriptional repressor NrdR (150 aa).

Residues 3-34 fold into a zinc finger; the sequence is CPFCNFEESKVVDSRATDDNTTIRRRRECLNC. Positions 49–139 constitute an ATP-cone domain; that stretch reads VLVVKKDLAR…VYRQFKDINT (91 aa).

Belongs to the NrdR family. Zn(2+) serves as cofactor.

Negatively regulates transcription of bacterial ribonucleotide reductase nrd genes and operons by binding to NrdR-boxes. The sequence is that of Transcriptional repressor NrdR from Clostridium botulinum (strain Eklund 17B / Type B).